The sequence spans 181 residues: Regulator of G-protein signaling 5 (181 aa).

The 117-residue stretch at 64–180 (SLDKLLQNSY…VRSEFYKELI (117 aa)) folds into the RGS domain.

As to expression, expressed in heart and muscle.

Its subcellular location is the cytoplasm. The protein resides in the membrane. Inhibits signal transduction by increasing the GTPase activity of G protein alpha subunits thereby driving them into their inactive GDP-bound form. Binds to G(i)-alpha and G(o)-alpha, but not to G(s)-alpha. The chain is Regulator of G-protein signaling 5 (Rgs5) from Mus musculus (Mouse).